A 520-amino-acid polypeptide reads, in one-letter code: MVFSSNVFLFLFLPVFLGLYYLSGERYRNLLLLIASYVFYAWWRVDFLLLFAGVTVFNYWIGLRIGAAGVRTRAAQRWLILGVVVDLCVLGYFKYANFGVDSLNEIITSFGMQPFVLTHILLPIGISFYTFESISYIIDVYRGDTPATHNLIDFAAFVAIFPHLIAGPVLRFKDLVDQFNHRTHTVDKFAEGCTRFMQGFVKKVFIADTLAALADHCFALQNPTTGDAWLGALAYTAQLYFDFSGYSDMAIGLGLMMGFRFMENFNQPYISQSITEFWRRWHISLSTWLRDYLYISLGGNRGSTFQTYRNLFLTMLLGGLWHGANFTYIIWGAWHGMWLAIERALGVNAAPRVLNPLKWVITFLLVVIGWVIFRAENLQVAWRMYEAMFSFGTWQLSELNRANLTGLQVGTLVLAYLVLAFFGLRQFYNQPLQTKAPKAAANSDEVAADGPASAQPRAPREAAGDPAAIAYSPSGALVYQPSWLSQLPVLATRLALLLLFAASVLKLSAQSYSPFLYFQF.

10 consecutive transmembrane segments (helical) span residues 7 to 24, 39 to 61, 78 to 100, 115 to 137, 150 to 172, 239 to 261, 311 to 333, 353 to 375, 402 to 424, and 483 to 505; these read VFLFLFLPVFLGLYYLSG, FYAWWRVDFLLLFAGVTVFNYWI, WLILGVVVDLCVLGYFKYANFGV, FVLTHILLPIGISFYTFESISYI, NLIDFAAFVAIFPHLIAGPVLRF, LYFDFSGYSDMAIGLGLMMGFRF, LFLTMLLGGLWHGANFTYIIWGA, VLNPLKWVITFLLVVIGWVIFRA, ANLTGLQVGTLVLAYLVLAFFGL, and WLSQLPVLATRLALLLLFAASVL. The active site involves His-322.

This sequence belongs to the membrane-bound acyltransferase family.

It localises to the cell inner membrane. The protein operates within glycan biosynthesis; alginate biosynthesis. Together with AlgJ and AlgF, forms an inner membrane complex which probably interacts with the alginate polymerization-transport complex and adds acetyl groups at the O-2 and O-3 positions of mannuronate residues. Acetylation of alginate is important for the architecture of biofilms and increases resistance to opsonic killing in the host. This Pseudomonas aeruginosa (strain ATCC 15692 / DSM 22644 / CIP 104116 / JCM 14847 / LMG 12228 / 1C / PRS 101 / PAO1) protein is Probable alginate O-acetylase AlgI (algI).